The sequence spans 418 residues: Serine hydroxymethyltransferase (418 aa).

Residues L121 and 125 to 127 each bind (6S)-5,6,7,8-tetrahydrofolate; that span reads GHL. K230 carries the post-translational modification N6-(pyridoxal phosphate)lysine. 356–358 contacts (6S)-5,6,7,8-tetrahydrofolate; it reads SPF.

It belongs to the SHMT family. In terms of assembly, homodimer. Pyridoxal 5'-phosphate serves as cofactor.

It localises to the cytoplasm. The catalysed reaction is (6R)-5,10-methylene-5,6,7,8-tetrahydrofolate + glycine + H2O = (6S)-5,6,7,8-tetrahydrofolate + L-serine. It functions in the pathway one-carbon metabolism; tetrahydrofolate interconversion. It participates in amino-acid biosynthesis; glycine biosynthesis; glycine from L-serine: step 1/1. Functionally, catalyzes the reversible interconversion of serine and glycine with tetrahydrofolate (THF) serving as the one-carbon carrier. This reaction serves as the major source of one-carbon groups required for the biosynthesis of purines, thymidylate, methionine, and other important biomolecules. Also exhibits THF-independent aldolase activity toward beta-hydroxyamino acids, producing glycine and aldehydes, via a retro-aldol mechanism. The polypeptide is Serine hydroxymethyltransferase (Shewanella piezotolerans (strain WP3 / JCM 13877)).